A 112-amino-acid polypeptide reads, in one-letter code: DNA-binding protein Memar_1972 (112 aa).

The disordered stretch occupies residues 14–35 (MEQMQRQAMDQQGMEEEAARQQ).

It belongs to the PDCD5 family.

In Methanoculleus marisnigri (strain ATCC 35101 / DSM 1498 / JR1), this protein is DNA-binding protein Memar_1972.